Reading from the N-terminus, the 117-residue chain is Nascent polypeptide-associated complex protein (117 aa).

One can recognise an NAC-A/B domain in the interval 9 to 77 (PKQLKQMQRA…ARERSLEAEM (69 aa)).

This sequence belongs to the NAC-alpha family. As to quaternary structure, homodimer. Interacts with the ribosome. Binds ribosomal RNA.

In terms of biological role, contacts the emerging nascent chain on the ribosome. This Methanothermobacter thermautotrophicus (strain ATCC 29096 / DSM 1053 / JCM 10044 / NBRC 100330 / Delta H) (Methanobacterium thermoautotrophicum) protein is Nascent polypeptide-associated complex protein.